Reading from the N-terminus, the 525-residue chain is Peptide chain release factor 3 (525 aa).

The 269-residue stretch at 11 to 279 folds into the tr-type G domain; sequence NKRRTFAIIS…TYLQFAPAPS (269 aa). GTP is bound by residues 20-27, 88-92, and 142-145; these read SHPDAGKT, DTPGH, and NKFD.

This sequence belongs to the TRAFAC class translation factor GTPase superfamily. Classic translation factor GTPase family. PrfC subfamily.

It localises to the cytoplasm. Increases the formation of ribosomal termination complexes and stimulates activities of RF-1 and RF-2. It binds guanine nucleotides and has strong preference for UGA stop codons. It may interact directly with the ribosome. The stimulation of RF-1 and RF-2 is significantly reduced by GTP and GDP, but not by GMP. The sequence is that of Peptide chain release factor 3 from Limosilactobacillus reuteri (strain DSM 20016) (Lactobacillus reuteri).